A 265-amino-acid polypeptide reads, in one-letter code: Tryptophan synthase alpha chain (265 aa).

Residues glutamate 48 and aspartate 59 each act as proton acceptor in the active site.

Belongs to the TrpA family. In terms of assembly, tetramer of two alpha and two beta chains.

The catalysed reaction is (1S,2R)-1-C-(indol-3-yl)glycerol 3-phosphate + L-serine = D-glyceraldehyde 3-phosphate + L-tryptophan + H2O. Its pathway is amino-acid biosynthesis; L-tryptophan biosynthesis; L-tryptophan from chorismate: step 5/5. Functionally, the alpha subunit is responsible for the aldol cleavage of indoleglycerol phosphate to indole and glyceraldehyde 3-phosphate. The polypeptide is Tryptophan synthase alpha chain (Ruthia magnifica subsp. Calyptogena magnifica).